Here is a 143-residue protein sequence, read N- to C-terminus: HTH-type transcriptional regulator MntR (143 aa).

Residues 1 to 63 (MPTPSMEDYL…YERYRGLVLT (63 aa)) enclose the HTH dtxR-type domain. Positions 8, 11, 77, 99, 102, and 103 each coordinate Mn(2+).

It belongs to the DtxR/MntR family. As to quaternary structure, homodimer.

Its subcellular location is the cytoplasm. DNA binding is strongly activated by Mn(2+). Central regulator of manganese homeostasis. This Shouchella clausii (strain KSM-K16) (Alkalihalobacillus clausii) protein is HTH-type transcriptional regulator MntR.